A 66-amino-acid chain; its full sequence is DNA-directed RNA polymerase subunit Rpo10 (66 aa).

Positions 7, 10, 44, and 45 each coordinate Zn(2+).

The protein belongs to the archaeal Rpo10/eukaryotic RPB10 RNA polymerase subunit family. Part of the RNA polymerase complex. Requires Zn(2+) as cofactor.

Its subcellular location is the cytoplasm. It catalyses the reaction RNA(n) + a ribonucleoside 5'-triphosphate = RNA(n+1) + diphosphate. In terms of biological role, DNA-dependent RNA polymerase (RNAP) catalyzes the transcription of DNA into RNA using the four ribonucleoside triphosphates as substrates. The protein is DNA-directed RNA polymerase subunit Rpo10 of Sulfurisphaera tokodaii (strain DSM 16993 / JCM 10545 / NBRC 100140 / 7) (Sulfolobus tokodaii).